A 345-amino-acid chain; its full sequence is Protein RecA (345 aa).

63–70 serves as a coordination point for ATP; the sequence is GPESSGKT. A disordered region spans residues 326–345; that stretch reads VLSDALMTDPEPDADGTPED. Positions 335 to 345 are enriched in acidic residues; that stretch reads PEPDADGTPED.

The protein belongs to the RecA family.

The protein localises to the cytoplasm. In terms of biological role, can catalyze the hydrolysis of ATP in the presence of single-stranded DNA, the ATP-dependent uptake of single-stranded DNA by duplex DNA, and the ATP-dependent hybridization of homologous single-stranded DNAs. It interacts with LexA causing its activation and leading to its autocatalytic cleavage. This is Protein RecA from Gluconobacter oxydans (strain 621H) (Gluconobacter suboxydans).